The sequence spans 402 residues: Dual-specificity RNA methyltransferase RlmN (402 aa).

The Proton acceptor role is filled by E94. Residues 100 to 351 (EDDRGTLCIS…ATVRKTRGDD (252 aa)) enclose the Radical SAM core domain. C107 and C356 are oxidised to a cystine. 3 residues coordinate [4Fe-4S] cluster: C114, C118, and C121. S-adenosyl-L-methionine-binding positions include 182 to 183 (GE), S214, 236 to 238 (SLH), and N313. C356 (S-methylcysteine intermediate) is an active-site residue.

The protein belongs to the radical SAM superfamily. RlmN family. Requires [4Fe-4S] cluster as cofactor.

The protein localises to the cytoplasm. It carries out the reaction adenosine(2503) in 23S rRNA + 2 reduced [2Fe-2S]-[ferredoxin] + 2 S-adenosyl-L-methionine = 2-methyladenosine(2503) in 23S rRNA + 5'-deoxyadenosine + L-methionine + 2 oxidized [2Fe-2S]-[ferredoxin] + S-adenosyl-L-homocysteine. It catalyses the reaction adenosine(37) in tRNA + 2 reduced [2Fe-2S]-[ferredoxin] + 2 S-adenosyl-L-methionine = 2-methyladenosine(37) in tRNA + 5'-deoxyadenosine + L-methionine + 2 oxidized [2Fe-2S]-[ferredoxin] + S-adenosyl-L-homocysteine. Functionally, specifically methylates position 2 of adenine 2503 in 23S rRNA and position 2 of adenine 37 in tRNAs. m2A2503 modification seems to play a crucial role in the proofreading step occurring at the peptidyl transferase center and thus would serve to optimize ribosomal fidelity. The protein is Dual-specificity RNA methyltransferase RlmN of Polynucleobacter asymbioticus (strain DSM 18221 / CIP 109841 / QLW-P1DMWA-1) (Polynucleobacter necessarius subsp. asymbioticus).